We begin with the raw amino-acid sequence, 826 residues long: MAEPSAPESKHKSSLNSSPWSGLMALGNSRHGHHGPGAQCAHKAAGGAAPPKPAPAGLSGGLSQPAGWQSLLSFTILFLAWLAGFSSRLFAVIRFESIIHEFDPWFNYRSTHHLASHGFYEFLNWFDERAWYPLGRIVGGTVYPGLMITAGLIHWILNTLNITVHIRDVCVFLAPTFSGLTSISTFLLTRELWNQGAGLLAACFIAIVPGYISRSVAGSFDNEGIAIFALQFTYYLWVKSVKTGSVFWTMCCCLSYFYMVSAWGGYVFIINLIPLHVFVLLLMQRYSKRVYIAYSTFYIVGLILSMQIPFVGFQPIRTSEHMAAAGVFALLQAYAFLQYLRDRLTKQEFQTLFFLGVSLAAGAVFLSVIYLTYTGYIAPWSGRFYSLWDTGYAKIHIPIIASVSEHQPTTWVSFFFDLHILVCTFPAGLWFCIKNINDERVFVALYAISAVYFAGVMVRLMLTLTPVVCMLSAIAFSNVFEHYLGDDMKRENPPVEDSSDEDDKRNQGNLYDKAGKVRKHATEQEKTEEGLGPNIKSIVTMLMLMLLMMFAVHCTWVTSNAYSSPSVVLASYNHDGTRNILDDFREAYFWLRQNTDEHARVMSWWDYGYQIAGMANRTTLVDNNTWNNSHIALVGKAMSSNETAAYKIMRTLDVDYVLVIFGGVIGYSGDDINKFLWMVRIAEGEHPKDIRESDYFTPQGEFRVDKAGSPTLLNCLMYKMSYYRFGEMQLDFRTPPGFDRTRNAEIGNKDIKFKHLEEAFTSEHWLVRIYKVKAPDNRETLDHKPRVTNIFPKQKYLSKKTTKRKRGYIKNKLVFKKGKKISKKTV.

Positions 1 to 60 are disordered; the sequence is MAEPSAPESKHKSSLNSSPWSGLMALGNSRHGHHGPGAQCAHKAAGGAAPPKPAPAGLSG. N-acetylalanine is present on alanine 2. The Cytoplasmic portion of the chain corresponds to 2–41; it reads AEPSAPESKHKSSLNSSPWSGLMALGNSRHGHHGPGAQCA. Phosphoserine is present on residues serine 13, serine 18, and serine 29. Residues 37–49 show a composition bias toward low complexity; sequence GAQCAHKAAGGAA. Residues 42-86 traverse the membrane as a helical segment; the sequence is HKAAGGAAPPKPAPAGLSGGLSQPAGWQSLLSFTILFLAWLAGFS. The Lumenal portion of the chain corresponds to 87–173; that stretch reads SRLFAVIRFE…VHIRDVCVFL (87 aa). The DXD motif 1 signature appears at 101–103; the sequence is EFD. Aspartate 103 serves as a coordination point for Mn(2+). A helical transmembrane segment spans residues 174–192; the sequence is APTFSGLTSISTFLLTREL. Over 193–194 the chain is Cytoplasmic; the sequence is WN. Residues 195–212 form a helical membrane-spanning segment; the sequence is QGAGLLAACFIAIVPGYI. The Lumenal portion of the chain corresponds to 213–223; the sequence is SRSVAGSFDNE. Residues aspartate 221 and glutamate 223 each contribute to the Mn(2+) site. Positions 221–223 match the DXD motif 2 motif; it reads DNE. Residues 224-243 form a helical membrane-spanning segment; sequence GIAIFALQFTYYLWVKSVKT. Topologically, residues 244–245 are cytoplasmic; the sequence is GS. Residues 246–260 form a helical membrane-spanning segment; that stretch reads VFWTMCCCLSYFYMV. Residues 261–265 are Lumenal-facing; that stretch reads SAWGG. A helical transmembrane segment spans residues 266–282; sequence YVFIINLIPLHVFVLLL. Residues 283–287 are Cytoplasmic-facing; it reads MQRYS. The helical transmembrane segment at 288–313 threads the bilayer; that stretch reads KRVYIAYSTFYIVGLILSMQIPFVGF. Residues 314-321 are Lumenal-facing; it reads QPIRTSEH. A helical membrane pass occupies residues 322 to 341; that stretch reads MAAAGVFALLQAYAFLQYLR. Over 342 to 350 the chain is Cytoplasmic; that stretch reads DRLTKQEFQ. A helical transmembrane segment spans residues 351–371; sequence TLFFLGVSLAAGAVFLSVIYL. The Lumenal portion of the chain corresponds to 372-410; sequence TYTGYIAPWSGRFYSLWDTGYAKIHIPIIASVSEHQPTT. Residues 402–405 carry the SVSE motif motif; that stretch reads SVSE. The chain crosses the membrane as a helical span at residues 411–433; sequence WVSFFFDLHILVCTFPAGLWFCI. Topologically, residues 434 to 439 are cytoplasmic; the sequence is KNINDE. Residues 440 to 456 form a helical membrane-spanning segment; it reads RVFVALYAISAVYFAGV. The Lumenal segment spans residues 457-460; sequence MVRL. Residue arginine 459 coordinates dolichyl diphosphooligosaccharide. Residues 461–482 traverse the membrane as a helical segment; that stretch reads MLTLTPVVCMLSAIAFSNVFEH. Over 483–526 the chain is Cytoplasmic; it reads YLGDDMKRENPPVEDSSDEDDKRNQGNLYDKAGKVRKHATEQEK. A disordered region spans residues 490-509; that stretch reads RENPPVEDSSDEDDKRNQGN. Phosphoserine is present on residues serine 498 and serine 499. Residues 527–552 traverse the membrane as a helical segment; that stretch reads TEEGLGPNIKSIVTMLMLMLLMMFAV. The Lumenal segment spans residues 553 to 826; that stretch reads HCTWVTSNAY…KGKKISKKTV (274 aa). An interacts with target acceptor peptide in protein substrate region spans residues 604–606; sequence WWD. A WWDYG motif motif is present at residues 604–608; sequence WWDYG. Tyrosine 609 provides a ligand contact to dolichyl diphosphooligosaccharide. N-linked (GlcNAc...) asparagine glycans are attached at residues asparagine 616 and asparagine 623. Asparagine 627 carries an N-linked (GlcNAc...) (high mannose) asparagine glycan. N-linked (GlcNAc...) asparagine glycosylation is present at asparagine 641. The short motif at 671–678 is the DK motif element; it reads DINKFLWM.

Belongs to the STT3 family. As to quaternary structure, component of the oligosaccharyltransferase (OST) complex. There are 2 OST complexes, OST-A and OST-B, which contain STT3A or STT3B as catalytic subunit, respectively. OST-A and OST-B contain common core subunits RPN1, RPN2, OST48, OST4, DAD1 and TMEM258, and OST-B contains either MAGT1 or TUSC3 as specific accessory subunit. The cofactor is Mg(2+). Mn(2+) serves as cofactor. In terms of tissue distribution, expressed in heart, brain, placenta, lung, liver, muscle, kidney and pancreas. Expressed in skin fibroblasts (at protein level).

It is found in the endoplasmic reticulum. Its subcellular location is the endoplasmic reticulum membrane. It carries out the reaction a di-trans,poly-cis-dolichyl diphosphooligosaccharide + L-asparaginyl-[protein] = N(4)-(oligosaccharide-(1-&gt;4)-N-acetyl-beta-D-glucosaminyl-(1-&gt;4)-N-acetyl-beta-D-glucosaminyl)-L-asparaginyl-[protein] + a di-trans,poly-cis-dolichyl diphosphate + H(+). Its pathway is protein modification; protein glycosylation. Functionally, catalytic subunit of the oligosaccharyl transferase (OST) complex that catalyzes the initial transfer of a defined glycan (Glc(3)Man(9)GlcNAc(2) in eukaryotes) from the lipid carrier dolichol-pyrophosphate to an asparagine residue within an Asn-X-Ser/Thr consensus motif in nascent polypeptide chains, the first step in protein N-glycosylation. N-glycosylation occurs cotranslationally and the complex associates with the Sec61 complex at the channel-forming translocon complex that mediates protein translocation across the endoplasmic reticulum (ER). All subunits are required for a maximal enzyme activity. This subunit contains the active site and the acceptor peptide and donor lipid-linked oligosaccharide (LLO) binding pockets. STT3B is present in a small subset of OST complexes (OST-B) and mediates both cotranslational and post-translational N-glycosylation of target proteins: STT3B-containing complexes are required for efficient post-translational glycosylation and while they are less competent than STT3A-containing complexes for cotranslational glycosylation, they have the ability to mediate glycosylation of some nascent sites that are not accessible for STT3A. STT3B-containing complexes also act post-translationally and mediate modification of skipped glycosylation sites in unfolded proteins. Plays a role in ER-associated degradation (ERAD) pathway that mediates ubiquitin-dependent degradation of misfolded endoplasmic reticulum proteins by mediating N-glycosylation of unfolded proteins, which are then recognized by the ERAD pathway and targeted for degradation. Mediates glycosylation of the disease variant AMYL-TTR 'Asp-38' of TTR at 'Asn-118', leading to its degradation. The polypeptide is Dolichyl-diphosphooligosaccharide--protein glycosyltransferase subunit STT3B (Homo sapiens (Human)).